Consider the following 50-residue polypeptide: Large ribosomal subunit protein bL33 (50 aa).

It belongs to the bacterial ribosomal protein bL33 family.

This is Large ribosomal subunit protein bL33 from Mycoplasmopsis synoviae (strain 53) (Mycoplasma synoviae).